The primary structure comprises 326 residues: Ankyrin repeat domain-containing protein 9 (326 aa).

A disordered region spans residues 1-20 (MPWDTRPGRSANGGPEGPGA). One copy of the ANK 1 repeat lies at 70 to 99 (SPSEALLYALVHDHQAYAHYLLATFPRCAL). The Important role in both nutrient sensing and binding/regulation of IMPDH2 signature appears at 108 to 109 (CC). 2 ANK repeats span residues 111–140 (APGP…DFPV) and 157–186 (GGGT…SPGL).

In terms of assembly, part of an E3 ubiquitin-protein ligase complex with Elongin BC (ELOB and ELOC), CUL5 and ANKRD9. Interacts with IMPDH2; leading to ubiquitination of IMPDH2 and its subsequent proteasomal degradation.

The protein resides in the cytoplasmic vesicle. It localises to the cytoplasm. The protein localises to the cytosol. It functions in the pathway protein modification; protein ubiquitination. Substrate receptor subunit of a cullin-RING superfamily E3 ligase complex (CUL5-based E3 ubiquitin ligase complex) which mediates the ubiquitination and subsequent proteasomal degradation of target proteins. Depending of the metabolic state of the cell, promotes the proteasomal degradation of IMPDH2, the rate-limiting enzyme in GTP biosynthesis or protects IMPDH2 by stabilizing IMPDH2 filaments assembly. Implicated in different cellular processes, like copper homeostasis and cell proliferation. This is Ankyrin repeat domain-containing protein 9 (Ankrd9) from Mus musculus (Mouse).